The primary structure comprises 446 residues: T-box transcription factor TBX20 (446 aa).

A disordered region spans residues 50–80; the sequence is SCHPNLGDLPPLETHSDFSSGGGTGSGAPLC. A DNA-binding region (T-box) is located at residues 108 to 287; sequence LWDKFHELGT…SNPFAKGFRD (180 aa).

Its subcellular location is the nucleus. Its function is as follows. Transcriptional regulator that may play a very early role in the differentiation of the cardiac precursors. This chain is T-box transcription factor TBX20 (tbx20), found in Danio rerio (Zebrafish).